The primary structure comprises 161 residues: UPF0262 protein SPOA0072 (161 aa).

A disordered region spans residues 1–21; the sequence is MTMSRISHIELDDSNLPPPTP.

This sequence belongs to the UPF0262 family.

This chain is UPF0262 protein SPOA0072, found in Ruegeria pomeroyi (strain ATCC 700808 / DSM 15171 / DSS-3) (Silicibacter pomeroyi).